The sequence spans 267 residues: 4-hydroxy-tetrahydrodipicolinate reductase (267 aa).

Residues 8–13 and aspartate 34 contribute to the NAD(+) site; that span reads GAAGRM. Arginine 35 provides a ligand contact to NADP(+). Residues 98-100 and 122-125 contribute to the NAD(+) site; these read GTT and AANF. Residue histidine 155 is the Proton donor/acceptor of the active site. Histidine 156 contacts (S)-2,3,4,5-tetrahydrodipicolinate. Lysine 159 serves as the catalytic Proton donor. Residue 165 to 166 participates in (S)-2,3,4,5-tetrahydrodipicolinate binding; that stretch reads GT.

It belongs to the DapB family.

The protein localises to the cytoplasm. It carries out the reaction (S)-2,3,4,5-tetrahydrodipicolinate + NAD(+) + H2O = (2S,4S)-4-hydroxy-2,3,4,5-tetrahydrodipicolinate + NADH + H(+). It catalyses the reaction (S)-2,3,4,5-tetrahydrodipicolinate + NADP(+) + H2O = (2S,4S)-4-hydroxy-2,3,4,5-tetrahydrodipicolinate + NADPH + H(+). Its pathway is amino-acid biosynthesis; L-lysine biosynthesis via DAP pathway; (S)-tetrahydrodipicolinate from L-aspartate: step 4/4. Functionally, catalyzes the conversion of 4-hydroxy-tetrahydrodipicolinate (HTPA) to tetrahydrodipicolinate. This is 4-hydroxy-tetrahydrodipicolinate reductase from Pseudomonas amygdali pv. tabaci (Pseudomonas syringae pv. tabaci).